A 327-amino-acid polypeptide reads, in one-letter code: L-serine dehydratase/L-threonine deaminase (327 aa).

N6-(pyridoxal phosphate)lysine is present on lysine 41.

It belongs to the serine/threonine dehydratase family. In terms of assembly, homodimer. It depends on pyridoxal 5'-phosphate as a cofactor.

Its subcellular location is the cytoplasm. It carries out the reaction L-serine = pyruvate + NH4(+). The catalysed reaction is L-threonine = 2-oxobutanoate + NH4(+). It participates in carbohydrate biosynthesis; gluconeogenesis. Functionally, catalyzes the pyridoxal-phosphate-dependent dehydrative deamination of L-threonine and L-serine to ammonia and alpha-ketobutyrate and pyruvate, respectively. This chain is L-serine dehydratase/L-threonine deaminase (SDS), found in Bos taurus (Bovine).